The following is a 273-amino-acid chain: Bis(5'-nucleosyl)-tetraphosphatase, symmetrical (273 aa).

Belongs to the Ap4A hydrolase family.

The catalysed reaction is P(1),P(4)-bis(5'-adenosyl) tetraphosphate + H2O = 2 ADP + 2 H(+). Functionally, hydrolyzes diadenosine 5',5'''-P1,P4-tetraphosphate to yield ADP. The protein is Bis(5'-nucleosyl)-tetraphosphatase, symmetrical of Aeromonas salmonicida (strain A449).